Consider the following 103-residue polypeptide: Acylphosphatase-2 (103 aa).

Positions 13 to 103 constitute an Acylphosphatase-like domain; it reads SVDYEVFGRV…LQYNGFSTRY (91 aa). Residues Arg28 and Asn46 contribute to the active site.

It belongs to the acylphosphatase family.

It carries out the reaction an acyl phosphate + H2O = a carboxylate + phosphate + H(+). This is Acylphosphatase-2 (acyp2) from Xenopus tropicalis (Western clawed frog).